We begin with the raw amino-acid sequence, 761 residues long: Neutral ceramidase (761 aa).

At 1-11 (MAKRTFSSLEA) the chain is on the cytoplasmic side. A helical; Signal-anchor for type II membrane protein membrane pass occupies residues 12–32 (FLIFLLVMMTAITVALLTLLF). The Lumenal segment spans residues 33–761 (VTSGTIENHK…ISSPFEIVTT (729 aa)). Positions 43-76 (DSGNHWVSTTQGPTTTQSSPTTQTPTTQTPDLPP) are disordered. The span at 50 to 76 (STTQGPTTTQSSPTTQTPTTQTPDLPP) shows a compositional bias: low complexity. Residues threonine 51, threonine 52, threonine 56, threonine 57, and threonine 58 are each glycosylated (O-linked (GalNAc...) threonine). Serine 60 and serine 61 each carry an O-linked (GalNAc...) serine glycan. O-linked (GalNAc...) threonine glycosylation is found at threonine 63, threonine 64, threonine 66, threonine 68, threonine 69, and threonine 71. Residue leucine 115 coordinates Ca(2+). Zn(2+) is bound at residue histidine 175. N-linked (GlcNAc...) asparagine glycosylation is present at asparagine 198. Zn(2+) is bound at residue histidine 284. Serine 335 (nucleophile) is an active-site residue. 2 cysteine pairs are disulfide-bonded: cysteine 343/cysteine 357 and cysteine 350/cysteine 365. Asparagine 412 and asparagine 449 each carry an N-linked (GlcNAc...) asparagine glycan. Cysteine 429 and cysteine 479 form a disulfide bridge. 2 residues coordinate Zn(2+): glutamate 521 and tyrosine 560. Ca(2+)-binding residues include aspartate 693, serine 695, and threonine 698. A required for correct folding and localization region spans residues 751–761 (GISSPFEIVTT).

It belongs to the neutral ceramidase family. Zn(2+) is required as a cofactor. Post-translationally, proteolytic cleavage of the N-terminus removes the signal-anchor and produces a soluble form of the protein. N-glycosylated. Required for enzyme activity. In terms of processing, O-glycosylated. Required to retain it as a type II membrane protein at the cell surface. Post-translationally, phosphorylated. May prevent ubiquitination and subsequent degradation. Ubiquitinated, leading to its degradation by the proteasome. Ubiquitination is triggered by nitric oxide. As to expression, highly expressed in brain, kidney and heart. Expressed at lower level in other tissues such as liver. Expressed in intestine, kidney and liver (at protein level). Localizes in the epithelia of the jejunum and ileum.

Its subcellular location is the cell membrane. It is found in the membrane raft. It localises to the membrane. The protein resides in the caveola. The protein localises to the golgi apparatus membrane. Its subcellular location is the mitochondrion. It is found in the secreted. It localises to the extracellular exosome. The enzyme catalyses an N-acylsphing-4-enine + H2O = sphing-4-enine + a fatty acid. It carries out the reaction N-hexadecanoylsphing-4-enine + H2O = sphing-4-enine + hexadecanoate. The catalysed reaction is N-tetradecanoylsphing-4-enine + H2O = tetradecanoate + sphing-4-enine. It catalyses the reaction N-(9Z-octadecenoyl)-sphing-4-enine + H2O = sphing-4-enine + (9Z)-octadecenoate. The enzyme catalyses N-(15Z-tetracosenoyl)-sphing-4-enine + H2O = (15Z)-tetracosenoate + sphing-4-enine. It carries out the reaction N-octanoylsphing-4-enine + H2O = octanoate + sphing-4-enine. The catalysed reaction is N-dodecanoylsphing-4-enine + H2O = dodecanoate + sphing-4-enine. It catalyses the reaction N-(hexanoyl)sphing-4-enine + H2O = hexanoate + sphing-4-enine. The enzyme catalyses N-octadecanoylsphing-4-enine + H2O = sphing-4-enine + octadecanoate. It carries out the reaction sphinganine + hexadecanoate = N-hexadecanoylsphinganine + H2O. The catalysed reaction is N-(octadecanoyl)-sphinganine + H2O = sphinganine + octadecanoate. The protein operates within lipid metabolism; sphingolipid metabolism. Its activity is regulated as follows. The reverse reaction is inhibited by Zn(2+) and Cu(2+). Inhibited by cardiolipin and phosphatidic acid. Functionally, plasma membrane ceramidase that hydrolyzes sphingolipid ceramides into sphingosine and free fatty acids at neutral pH. Ceramides, sphingosine, and its phosphorylated form sphingosine-1-phosphate are bioactive lipids that mediate cellular signaling pathways regulating several biological processes including cell proliferation, apoptosis and differentiation. Also catalyzes the reverse reaction allowing the synthesis of ceramides from fatty acids and sphingosine. Together with sphingomyelinase, participates in the production of sphingosine and sphingosine-1-phosphate from the degradation of sphingomyelin, a sphingolipid enriched in the plasma membrane of cells. Also participates in the hydrolysis of ceramides from the extracellular milieu allowing the production of sphingosine-1-phosphate inside and outside cells. This is the case for instance with the digestion of dietary sphingolipids in the intestinal tract. The sequence is that of Neutral ceramidase (Asah2) from Rattus norvegicus (Rat).